A 239-amino-acid chain; its full sequence is Small ribosomal subunit protein uS3 (239 aa).

In terms of domain architecture, KH type-2 spans 39–107; the sequence is IREFIKEECK…ELHLNIVEVR (69 aa). Positions 212–221 are enriched in basic and acidic residues; that stretch reads PQARDRKAQE. The tract at residues 212–239 is disordered; that stretch reads PQARDRKAQELQDGPAPRGAGGNRRGDR. Gly residues predominate over residues 230–239; it reads GAGGNRRGDR.

The protein belongs to the universal ribosomal protein uS3 family. In terms of assembly, part of the 30S ribosomal subunit. Forms a tight complex with proteins S10 and S14.

Binds the lower part of the 30S subunit head. Binds mRNA in the 70S ribosome, positioning it for translation. In Ruegeria sp. (strain TM1040) (Silicibacter sp.), this protein is Small ribosomal subunit protein uS3.